Reading from the N-terminus, the 315-residue chain is MQIKLANPRGFCAGVDRAIEIVNRALEVFGPPIYVRHEVVHNKFVVEDLRNRGAIFVEELDQVPDDVIVIFSAHGVSQAVRSEAAGRGLKVFDATCPLVTKVHIEVARYSRDGRECILIGHAGHPEVEGTMGQYDASNGGAIYLVEDEKDVAELQVRNPERLAFVTQTTLSMDDTSRVIDALRTRFPAIGGPRKDDICYATQNRQDAVKQLADECDVVLVVGSPNSSNSNRLRELAERMATPAYLIDGAEDLQRSWFDGVERIGITAGASAPEVLVRGVIQQLQAWGATGADELAGREENITFSMPKELRVRSLL.

C12 contributes to the [4Fe-4S] cluster binding site. (2E)-4-hydroxy-3-methylbut-2-enyl diphosphate contacts are provided by H41 and H74. The dimethylallyl diphosphate site is built by H41 and H74. H41 and H74 together coordinate isopentenyl diphosphate. Residue C96 participates in [4Fe-4S] cluster binding. Residue H124 participates in (2E)-4-hydroxy-3-methylbut-2-enyl diphosphate binding. Residue H124 participates in dimethylallyl diphosphate binding. Residue H124 participates in isopentenyl diphosphate binding. Catalysis depends on E126, which acts as the Proton donor. T168 contacts (2E)-4-hydroxy-3-methylbut-2-enyl diphosphate. Residue C198 coordinates [4Fe-4S] cluster. (2E)-4-hydroxy-3-methylbut-2-enyl diphosphate is bound by residues S226, S227, N228, and S270. 4 residues coordinate dimethylallyl diphosphate: S226, S227, N228, and S270. S226, S227, N228, and S270 together coordinate isopentenyl diphosphate.

It belongs to the IspH family. Requires [4Fe-4S] cluster as cofactor.

It carries out the reaction isopentenyl diphosphate + 2 oxidized [2Fe-2S]-[ferredoxin] + H2O = (2E)-4-hydroxy-3-methylbut-2-enyl diphosphate + 2 reduced [2Fe-2S]-[ferredoxin] + 2 H(+). The enzyme catalyses dimethylallyl diphosphate + 2 oxidized [2Fe-2S]-[ferredoxin] + H2O = (2E)-4-hydroxy-3-methylbut-2-enyl diphosphate + 2 reduced [2Fe-2S]-[ferredoxin] + 2 H(+). The protein operates within isoprenoid biosynthesis; dimethylallyl diphosphate biosynthesis; dimethylallyl diphosphate from (2E)-4-hydroxy-3-methylbutenyl diphosphate: step 1/1. Its pathway is isoprenoid biosynthesis; isopentenyl diphosphate biosynthesis via DXP pathway; isopentenyl diphosphate from 1-deoxy-D-xylulose 5-phosphate: step 6/6. Functionally, catalyzes the conversion of 1-hydroxy-2-methyl-2-(E)-butenyl 4-diphosphate (HMBPP) into a mixture of isopentenyl diphosphate (IPP) and dimethylallyl diphosphate (DMAPP). Acts in the terminal step of the DOXP/MEP pathway for isoprenoid precursor biosynthesis. This chain is 4-hydroxy-3-methylbut-2-enyl diphosphate reductase, found in Pseudomonas fluorescens (strain ATCC BAA-477 / NRRL B-23932 / Pf-5).